The sequence spans 163 residues: Aspartate 1-decarboxylase (163 aa).

Residue Ser-25 is the Schiff-base intermediate with substrate; via pyruvic acid of the active site. Residue Ser-25 is modified to Pyruvic acid (Ser). Position 57 (Thr-57) interacts with substrate. The active-site Proton donor is Tyr-58. 73-75 is a substrate binding site; sequence GAA.

This sequence belongs to the PanD family. In terms of assembly, heterooctamer of four alpha and four beta subunits. The cofactor is pyruvate. Is synthesized initially as an inactive proenzyme, which is activated by self-cleavage at a specific serine bond to produce a beta-subunit with a hydroxyl group at its C-terminus and an alpha-subunit with a pyruvoyl group at its N-terminus.

Its subcellular location is the cytoplasm. It carries out the reaction L-aspartate + H(+) = beta-alanine + CO2. The protein operates within cofactor biosynthesis; (R)-pantothenate biosynthesis; beta-alanine from L-aspartate: step 1/1. In terms of biological role, catalyzes the pyruvoyl-dependent decarboxylation of aspartate to produce beta-alanine. This chain is Aspartate 1-decarboxylase, found in Saccharopolyspora erythraea (strain ATCC 11635 / DSM 40517 / JCM 4748 / NBRC 13426 / NCIMB 8594 / NRRL 2338).